Consider the following 119-residue polypeptide: Large ribosomal subunit protein uL22 (119 aa).

It belongs to the universal ribosomal protein uL22 family. In terms of assembly, part of the 50S ribosomal subunit.

This protein binds specifically to 23S rRNA; its binding is stimulated by other ribosomal proteins, e.g. L4, L17, and L20. It is important during the early stages of 50S assembly. It makes multiple contacts with different domains of the 23S rRNA in the assembled 50S subunit and ribosome. Functionally, the globular domain of the protein is located near the polypeptide exit tunnel on the outside of the subunit, while an extended beta-hairpin is found that lines the wall of the exit tunnel in the center of the 70S ribosome. This chain is Large ribosomal subunit protein uL22, found in Tropheryma whipplei (strain TW08/27) (Whipple's bacillus).